Reading from the N-terminus, the 276-residue chain is Beta-lactamase OXA-1 (276 aa).

The N-terminal stretch at 1–25 (MKNTIHINFAIFLIIANIIYSSASA) is a signal peptide. The Acyl-ester intermediate role is filled by serine 71. Positions 71, 74, 118, 216, and 218 each coordinate a beta-lactam. At lysine 74 the chain carries N6-carboxylysine.

This sequence belongs to the class-D beta-lactamase family. In terms of assembly, monomer.

It localises to the periplasm. It carries out the reaction a beta-lactam + H2O = a substituted beta-amino acid. With respect to regulation, inhibited by penicillin sulfones. Only weakly inhibited by clavulanic acid and sulbactam. In terms of biological role, class D beta-lactamase which confers resistance to the beta-lactam antibiotics, including amoxicillin and ticarcillin. Acts via hydrolysis of the beta-lactam ring. Has penicillin- and cephalosporin-hydrolyzing activities. In Escherichia coli, this protein is Beta-lactamase OXA-1.